The primary structure comprises 285 residues: SKVVIATKVASRSSHLSWLRSGDCKLSKDNILKAVDGSLSRLNTDYIDLLQLHWPDRYVPMNANGDFHEVFHDTENMIDENSVPLEDQLDALQTLLTQGKIRHWGLSNETPWGTLRFYKLAKQAGVAAPASVQLHYNLLCRNEVEKGFVELCRPQNTGIAILAYAPLAGGILTGKYLEYMDPTTSGRLLRFPSYMSRYRGSLAARAVKDYYNIAMSYKYPNLCALALRWVLTRPFICSTVIGANDFYQLRENIHCSMPSLGITDLLEREINQLHWKWRDPIRICQ.

Residue 165–175 (APLAGGILTGK) participates in NADP(+) binding.

The protein belongs to the aldo/keto reductase family. Aldo/keto reductase 2 subfamily.

The polypeptide is Aldo-keto reductase (Babesia bovis).